The chain runs to 149 residues: uncharacterized protein (149 aa).

Positions 1 to 103 (MFGLKVKNAE…SPTQGSRLRH (103 aa)) are disordered. The segment covering 7–18 (KNAEADTAKSNE) has biased composition (basic and acidic residues). A compositionally biased stretch (low complexity) spans 26 to 41 (TGSSTTSGSGQSTQRG). Residues 61–72 (GSQGNSGDQGTE) show a composition bias toward polar residues.

The protein belongs to the adhesin P1 family.

This is an uncharacterized protein from Mycoplasma pneumoniae (strain ATCC 29342 / M129 / Subtype 1) (Mycoplasmoides pneumoniae).